Reading from the N-terminus, the 243-residue chain is Orotidine 5'-phosphate decarboxylase (243 aa).

Residues D19, K41, 69–78 (DLKFFDIPAT), T124, R185, Q194, G214, and R215 contribute to the substrate site. K71 acts as the Proton donor in catalysis.

It belongs to the OMP decarboxylase family. Type 1 subfamily. As to quaternary structure, homodimer.

The enzyme catalyses orotidine 5'-phosphate + H(+) = UMP + CO2. The protein operates within pyrimidine metabolism; UMP biosynthesis via de novo pathway; UMP from orotate: step 2/2. Catalyzes the decarboxylation of orotidine 5'-monophosphate (OMP) to uridine 5'-monophosphate (UMP). The protein is Orotidine 5'-phosphate decarboxylase of Xanthomonas oryzae pv. oryzae (strain MAFF 311018).